Here is an 835-residue protein sequence, read N- to C-terminus: Protein translocase subunit SecA (835 aa).

Residues Gln-85, 103–107, and Asp-492 each bind ATP; that span reads GEGKT. Residues Cys-819, Cys-821, Cys-830, and Cys-831 each contribute to the Zn(2+) site.

Belongs to the SecA family. As to quaternary structure, monomer and homodimer. Part of the essential Sec protein translocation apparatus which comprises SecA, SecYEG and auxiliary proteins SecDF. Other proteins may also be involved. Requires Zn(2+) as cofactor.

It is found in the cell membrane. The protein resides in the cytoplasm. It carries out the reaction ATP + H2O + cellular proteinSide 1 = ADP + phosphate + cellular proteinSide 2.. In terms of biological role, part of the Sec protein translocase complex. Interacts with the SecYEG preprotein conducting channel. Has a central role in coupling the hydrolysis of ATP to the transfer of proteins into and across the cell membrane, serving as an ATP-driven molecular motor driving the stepwise translocation of polypeptide chains across the membrane. The chain is Protein translocase subunit SecA from Clostridium botulinum (strain Kyoto / Type A2).